The following is a 363-amino-acid chain: 3-isopropylmalate dehydrogenase (363 aa).

NAD(+) is bound at residue 78 to 91 (GPKWEHLPPDQQPE). The substrate site is built by arginine 99, arginine 109, arginine 138, and aspartate 227. Residues aspartate 227, aspartate 251, and aspartate 255 each coordinate Mg(2+). 285–297 (GSAPDIAGKNIAN) contributes to the NAD(+) binding site.

The protein belongs to the isocitrate and isopropylmalate dehydrogenases family. LeuB type 1 subfamily. In terms of assembly, homodimer. Mg(2+) serves as cofactor. Requires Mn(2+) as cofactor.

It is found in the cytoplasm. It carries out the reaction (2R,3S)-3-isopropylmalate + NAD(+) = 4-methyl-2-oxopentanoate + CO2 + NADH. The protein operates within amino-acid biosynthesis; L-leucine biosynthesis; L-leucine from 3-methyl-2-oxobutanoate: step 3/4. Functionally, catalyzes the oxidation of 3-carboxy-2-hydroxy-4-methylpentanoate (3-isopropylmalate) to 3-carboxy-4-methyl-2-oxopentanoate. The product decarboxylates to 4-methyl-2 oxopentanoate. The polypeptide is 3-isopropylmalate dehydrogenase (Shigella flexneri).